We begin with the raw amino-acid sequence, 342 residues long: MSEAIKTDVLIIGAGPCGLFAVFELGLLDMKVHLVDILDKIGGQCAELYPEKPIYDIPGIPLVTGQGLTEALLEQIKPFNPTFHLNEMVESIEKIGDPGFRVTTDAGQVFECKVVVVSAGGGSFQPKRPPVPGIEAYENISVFYAVRKMEQFRDKEILIVGGGDSALDWTLNLHPLAKRITLLHRRDEFRAAPHSVEQMRKLVADGTMDLKIGQVTALEGADGKLTGAQVKGSDNTTSTVSCDTMLPFFGLTMKLGPVANWGLHLENNLIPVETASFETNVPGIFAIGDINTYPGKLKLILSGFHEGALMAQKAHRYVYPDKRLVFQYTTSSSSLQKKLGVN.

FAD contacts are provided by cysteine 17, aspartate 36, glutamine 44, tyrosine 49, valine 89, phenylalanine 124, aspartate 289, and threonine 330.

The protein belongs to the ferredoxin--NADP reductase type 2 family. As to quaternary structure, homodimer. It depends on FAD as a cofactor.

It carries out the reaction 2 reduced [2Fe-2S]-[ferredoxin] + NADP(+) + H(+) = 2 oxidized [2Fe-2S]-[ferredoxin] + NADPH. The sequence is that of Ferredoxin--NADP reductase from Nitrobacter winogradskyi (strain ATCC 25391 / DSM 10237 / CIP 104748 / NCIMB 11846 / Nb-255).